Reading from the N-terminus, the 250-residue chain is MAEAASCARKGTKYAEGTQPFTVLIEGNIGSGKTTYLNHFEKYKNDICLLTEPVEKWRNVNGVNLLELMYKDPKKWAMPFQSYVTLTMLQSHTAPTNKKLKIMERSIFSARYCFVENMRRNGSLEQGMYNTLEEWYKFIEESIHVQADLIIYLRTSPEVAYERIRQRARSEESCVPLKYLQELHELHEDWLIHQRRPQSCKVLVLDADLNLENIGTEYQRSESSIFDAISSNQQPSPVLVSPSKRQRVAR.

27–35 is a binding site for ATP; it reads GNIGSGKTT. Substrate is bound by residues glutamate 52, tyrosine 70, and glutamine 81. Glutamate 104 (proton acceptor) is an active-site residue. 2 residues coordinate substrate: arginine 105 and glutamate 172. Residues serine 236, serine 241, and serine 243 each carry the phosphoserine modification.

Belongs to the DCK/DGK family. As to quaternary structure, monomer.

It carries out the reaction a 2'-deoxyribonucleoside + ATP = a 2'-deoxyribonucleoside 5'-phosphate + ADP + H(+). Subject to feedback inhibition by dTTP. Its function is as follows. Deoxyribonucleoside kinase that has a broad specificity phosphorylating thymidine, 2'-deoxyriboadenosine, 2'-deoxyribocytidine and 2'-deoxyriboguanosine. Specificity is higher for pyrimidine nucleosides. Several anti-viral and anti-cancer nucleoside analogs are also efficiently phosphorylated. This chain is Deoxynucleoside kinase (dnk), found in Drosophila melanogaster (Fruit fly).